The primary structure comprises 387 residues: Patatin-13 (387 aa).

Residues 1–23 (MATTKSVLVLIFMILATTSSTFA) form the signal peptide. The 199-residue stretch at 32 to 230 (LSVDGGGIKG…TVADPALLSV (199 aa)) folds into the PNPLA domain. Positions 36 to 41 (GGGIKG) match the GXGXXG motif. The GXSXG motif lies at 75-79 (GTSTG). Ser-77 serves as the catalytic Nucleophile. Asn-115 and Asn-203 each carry an N-linked (GlcNAc...) asparagine glycan. Asp-216 (proton acceptor) is an active-site residue. A DGA/G motif is present at residues 216 to 218 (DGA). A coiled-coil region spans residues 361–385 (ETYEEALKRFAKLLSDRKKLRANKA).

This sequence belongs to the patatin family. As to expression, tuber.

Its subcellular location is the vacuole. Functionally, probable lipolytic acyl hydrolase (LAH), an activity which is thought to be involved in the response of tubers to pathogens. The protein is Patatin-13 of Solanum tuberosum (Potato).